A 291-amino-acid chain; its full sequence is Bis(5'-nucleosyl)-tetraphosphatase, symmetrical (291 aa).

Belongs to the Ap4A hydrolase family.

The catalysed reaction is P(1),P(4)-bis(5'-adenosyl) tetraphosphate + H2O = 2 ADP + 2 H(+). Hydrolyzes diadenosine 5',5'''-P1,P4-tetraphosphate to yield ADP. The chain is Bis(5'-nucleosyl)-tetraphosphatase, symmetrical from Coxiella burnetii (strain Dugway 5J108-111).